Reading from the N-terminus, the 104-residue chain is MFSTSDQVSKMNSRILSALLILGIATCVIAGGFCPKSRHPQCNLSYKINDCCAQSDCRVGSVCCVEGCGNVCRAESDTPLGEKFVDGSECKHGHVFPKKWYQFW.

An N-terminal signal peptide occupies residues Met-1 to Ala-30. The WAP domain occupies Gly-31–Ser-76. Cystine bridges form between Cys-34–Cys-64, Cys-42–Cys-68, Cys-51–Cys-63, Cys-52–Cys-90, and Cys-57–Cys-72.

Belongs to the venom protein 11 family. 02 (wap-2) subfamily. In terms of processing, contains 5 disulfide bonds. Expressed by the venom gland.

It is found in the secreted. Its function is as follows. Has antibacterial activity. This is U20-lycotoxin-Ls1a from Lycosa singoriensis (Wolf spider).